We begin with the raw amino-acid sequence, 622 residues long: FERM domain-containing protein 6 (622 aa).

The FERM domain maps to 16 to 328 (RRVCIFLPND…NSHRLYMNLQ (313 aa)). The tract at residues 357–452 (LDMDPLEKRS…KDRLEEDSQD (96 aa)) is disordered. 2 stretches are compositionally biased toward low complexity: residues 384-395 (HSTASHSSSHTS) and 425-438 (SSMT…TSGV). A Phosphoserine modification is found at Ser522. Thr523 carries the phosphothreonine modification. Phosphoserine is present on residues Ser525, Ser542, and Ser544.

It is found in the cytoplasm. It localises to the cell membrane. This chain is FERM domain-containing protein 6 (Frmd6), found in Mus musculus (Mouse).